A 226-amino-acid chain; its full sequence is Exopolysaccharide production protein ExoY (226 aa).

Residues 34 to 54 form a helical membrane-spanning segment; it reads VLAASVALLLFSPLFLLIMAL.

Belongs to the bacterial sugar transferase family.

The protein resides in the cell membrane. It participates in glycan metabolism; exopolysaccharide biosynthesis. Needed for the addition of the first sugar (galactose) to the isoprenoid carrier. May function as a sugar transferase. This is Exopolysaccharide production protein ExoY (exoY) from Rhizobium meliloti (strain 1021) (Ensifer meliloti).